Consider the following 792-residue polypeptide: Oxidoreductase cns1 (792 aa).

In terms of assembly, interacts with cns2.

Its subcellular location is the lipid droplet. Its pathway is secondary metabolite biosynthesis. In terms of biological role, oxidoreductase; part of the gene cluster that mediates the biosynthesis of cordycepin (COR) and pentostatin (PTN), two adenosine analogs with related bioactivity profiles as both mimic adenosine and can inhibit some of the processes that are adenosine dependent. Within the pathway, cns1 catalyzes the last step by converting the cns2 product 2'-carbonyl-3'-deoxyadenosine (2'-C-3'-dA) into cordycepin (3'-deoxyadenosine). The first step of cordycepin biosynthesis involves hydroxyl phosphorylation of the 3'-OH position on adenosine to produce adenosine-3'-monophosphate (3'-AMP), catalyzed by kinase activity of cns3. Next, 3'-AMP is dephosphorylated to 2'-carbonyl-3'-deoxyadenosine by cns2, which is finally converted to cordycepin by the oxidoreductase cns1. Pentostatin production is mediated by the ATP phosphoribosyltransferase activity of cns3 on adenosine to inhibit the activity of adenosine deaminase (ADA) to prevent COR deamination to 3'-deoxyinosine (3'-dI). The protein is Oxidoreductase cns1 of Cordyceps militaris (strain CM01) (Caterpillar fungus).